We begin with the raw amino-acid sequence, 226 residues long: Leucyl/phenylalanyl-tRNA--protein transferase (226 aa).

It belongs to the L/F-transferase family.

The protein resides in the cytoplasm. The enzyme catalyses N-terminal L-lysyl-[protein] + L-leucyl-tRNA(Leu) = N-terminal L-leucyl-L-lysyl-[protein] + tRNA(Leu) + H(+). It carries out the reaction N-terminal L-arginyl-[protein] + L-leucyl-tRNA(Leu) = N-terminal L-leucyl-L-arginyl-[protein] + tRNA(Leu) + H(+). The catalysed reaction is L-phenylalanyl-tRNA(Phe) + an N-terminal L-alpha-aminoacyl-[protein] = an N-terminal L-phenylalanyl-L-alpha-aminoacyl-[protein] + tRNA(Phe). Functions in the N-end rule pathway of protein degradation where it conjugates Leu, Phe and, less efficiently, Met from aminoacyl-tRNAs to the N-termini of proteins containing an N-terminal arginine or lysine. In Stutzerimonas stutzeri (strain A1501) (Pseudomonas stutzeri), this protein is Leucyl/phenylalanyl-tRNA--protein transferase.